The chain runs to 369 residues: Dual specificity protein phosphatase 1-B (369 aa).

The 118-residue stretch at 21 to 138 (RAHKCLILDC…FSSQCPEFCN (118 aa)) folds into the Rhodanese domain. At threonine 168 the chain carries Phosphothreonine; by MAPK1. The Tyrosine-protein phosphatase domain occupies 175-316 (GPVEILPFLY…LLQFESQVLA (142 aa)). Cysteine 260 serves as the catalytic Phosphocysteine intermediate.

The protein belongs to the protein-tyrosine phosphatase family. Non-receptor class dual specificity subfamily. In terms of processing, phosphorylated by MAPK1/ERK2 at Thr-168 and at one or more serine residues in a progesterone-dependent manner. Phosphorylation reduces its rate of degradation but does not seem to affect phosphatase activity.

It localises to the nucleus. The enzyme catalyses O-phospho-L-seryl-[protein] + H2O = L-seryl-[protein] + phosphate. It carries out the reaction O-phospho-L-threonyl-[protein] + H2O = L-threonyl-[protein] + phosphate. The catalysed reaction is O-phospho-L-tyrosyl-[protein] + H2O = L-tyrosyl-[protein] + phosphate. Functionally, dual specificity phosphatase that dephosphorylates MAP kinase MAPK1/ERK2 on both 'Thr-188' and 'Tyr-190', regulating its activity during the meiotic cell cycle. This chain is Dual specificity protein phosphatase 1-B, found in Xenopus laevis (African clawed frog).